The primary structure comprises 218 residues: Hypoxanthine-guanine phosphoribosyltransferase (218 aa).

At alanine 2 the chain carries N-acetylalanine. Position 69 (lysine 69) interacts with GMP. Lysine 103 carries the N6-acetyllysine modification. Residue lysine 115 forms a Glycyl lysine isopeptide (Lys-Gly) (interchain with G-Cter in SUMO1); alternate linkage. Lysine 115 participates in a covalent cross-link: Glycyl lysine isopeptide (Lys-Gly) (interchain with G-Cter in SUMO2); alternate. GMP contacts are provided by residues 134–142 (EDIIDTGKT), lysine 166, 186–188 (KFV), and aspartate 194. Aspartate 138 (proton acceptor) is an active-site residue. Threonine 142 carries the phosphothreonine modification. Residue aspartate 194 coordinates Mg(2+).

It belongs to the purine/pyrimidine phosphoribosyltransferase family. In terms of assembly, homotetramer. It depends on Mg(2+) as a cofactor.

Its subcellular location is the cytoplasm. The catalysed reaction is IMP + diphosphate = hypoxanthine + 5-phospho-alpha-D-ribose 1-diphosphate. It catalyses the reaction GMP + diphosphate = guanine + 5-phospho-alpha-D-ribose 1-diphosphate. The protein operates within purine metabolism; IMP biosynthesis via salvage pathway; IMP from hypoxanthine: step 1/1. Its function is as follows. Converts guanine to guanosine monophosphate, and hypoxanthine to inosine monophosphate. Transfers the 5-phosphoribosyl group from 5-phosphoribosylpyrophosphate onto the purine. Plays a central role in the generation of purine nucleotides through the purine salvage pathway. The polypeptide is Hypoxanthine-guanine phosphoribosyltransferase (HPRT1) (Homo sapiens (Human)).